A 95-amino-acid polypeptide reads, in one-letter code: Aspartyl/glutamyl-tRNA(Asn/Gln) amidotransferase subunit C (95 aa).

Belongs to the GatC family. As to quaternary structure, heterotrimer of A, B and C subunits.

The catalysed reaction is L-glutamyl-tRNA(Gln) + L-glutamine + ATP + H2O = L-glutaminyl-tRNA(Gln) + L-glutamate + ADP + phosphate + H(+). It carries out the reaction L-aspartyl-tRNA(Asn) + L-glutamine + ATP + H2O = L-asparaginyl-tRNA(Asn) + L-glutamate + ADP + phosphate + 2 H(+). In terms of biological role, allows the formation of correctly charged Asn-tRNA(Asn) or Gln-tRNA(Gln) through the transamidation of misacylated Asp-tRNA(Asn) or Glu-tRNA(Gln) in organisms which lack either or both of asparaginyl-tRNA or glutaminyl-tRNA synthetases. The reaction takes place in the presence of glutamine and ATP through an activated phospho-Asp-tRNA(Asn) or phospho-Glu-tRNA(Gln). This chain is Aspartyl/glutamyl-tRNA(Asn/Gln) amidotransferase subunit C, found in Chloroherpeton thalassium (strain ATCC 35110 / GB-78).